An 836-amino-acid chain; its full sequence is Serine/threonine-protein kinase 1 (836 aa).

A compositionally biased stretch (basic residues) spans 1–12; sequence MDHNSPKSRRSR. Positions 1–244 are disordered; the sequence is MDHNSPKSRR…SLPDSITRED (244 aa). Over residues 28 to 40 the composition is skewed to basic and acidic residues; that stretch reads SDSDSDQGRDRDK. 3 stretches are compositionally biased toward acidic residues: residues 64–75, 95–105, and 145–163; these read DGEGEEDDDDDS, DYDDDDGDESG, and EESSDEEDEEEDDDDDDGD. Residues 224 to 238 are compositionally biased toward polar residues; the sequence is MQQQNSKMSTTSLPD. In terms of domain architecture, Protein kinase spans 249-503; sequence YEFLNELGKG…AAEMLKHKFV (255 aa). ATP-binding positions include 255–263 and Lys278; that span reads LGKGSYGSV. Asp371 functions as the Proton acceptor in the catalytic mechanism. 3 disordered regions span residues 539-571, 600-640, and 760-780; these read LEDTSTLGPKSSEELGITVPSKPPQNSTEAPLT, EDET…DSWI, and TSSDPQSKKGRRGQNEMPLPP. The segment covering 562–571 has biased composition (polar residues); that stretch reads PQNSTEAPLT. Over residues 606-618 the composition is skewed to basic and acidic residues; that stretch reads SDSRSQLVREKES.

Belongs to the protein kinase superfamily. STE Ser/Thr protein kinase family. STE20 subfamily. In terms of assembly, interacts with MOB1A and MOB1B via its N-terminal region at the plasma membrane and in the nucleus. Binds to BIK1 to phosphorylate and stabilize it. Interacts with and phosphorylates RBOHD upon flagellin perception to activate it. It depends on Mn(2+) as a cofactor. Post-translationally, autophosphorylates. Mostly expressed in mature tissues of roots, shoots, hypocotyls, cotyledons, stems, leaves and flowers, as well as in the shoot apical meristem (SAM).

It is found in the cell membrane. The protein localises to the nucleus. It localises to the golgi apparatus. Its subcellular location is the trans-Golgi network. The protein resides in the early endosome. It carries out the reaction L-seryl-[protein] + ATP = O-phospho-L-seryl-[protein] + ADP + H(+). It catalyses the reaction L-threonyl-[protein] + ATP = O-phospho-L-threonyl-[protein] + ADP + H(+). Serine/threonine-protein kinase. Regulates organ size in coordination with MOB1A by modulating cell proliferation and cell expansion, possibly by facilitating cell cycle exit. Positive regulator of the pathogen-associated molecular pattern (PAMP, e.g. flg22)-triggered immunity (PTI) signaling by stabilizing BIK1 and activating RBOHD by phosphorylation to promote the extracellular reactive oxygen species (ROS) burst involved in defense responses to bacterial infection. The polypeptide is Serine/threonine-protein kinase 1 (Arabidopsis thaliana (Mouse-ear cress)).